The sequence spans 840 residues: DNA mismatch repair protein MutS (840 aa).

601 to 608 (GPNMSGKS) is an ATP binding site.

This sequence belongs to the DNA mismatch repair MutS family.

In terms of biological role, this protein is involved in the repair of mismatches in DNA. It is possible that it carries out the mismatch recognition step. This protein has a weak ATPase activity. In Lactococcus lactis subsp. cremoris (strain MG1363), this protein is DNA mismatch repair protein MutS.